Consider the following 263-residue polypeptide: Putative hydro-lyase Pden_0321 (263 aa).

It belongs to the D-glutamate cyclase family.

This is Putative hydro-lyase Pden_0321 from Paracoccus denitrificans (strain Pd 1222).